Reading from the N-terminus, the 88-residue chain is Antitoxin VapB21 (88 aa).

Its function is as follows. Antitoxin component of a type II toxin-antitoxin (TA) system. This is Antitoxin VapB21 (vapB21) from Mycobacterium tuberculosis (strain CDC 1551 / Oshkosh).